The primary structure comprises 313 residues: D-alanine--D-alanine ligase (313 aa).

Positions 108-308 (KLVWQQTGVP…YSELVVKVLS (201 aa)) constitute an ATP-grasp domain. ATP is bound at residue 138–193 (VAKLGLPLFVKPASEGSSVAVLKVKTADALPAALAEAATHDKIVIVEKSIEGGGEY). D262, E275, and N277 together coordinate Mg(2+).

This sequence belongs to the D-alanine--D-alanine ligase family. It depends on Mg(2+) as a cofactor. Mn(2+) is required as a cofactor.

The protein resides in the cytoplasm. The enzyme catalyses 2 D-alanine + ATP = D-alanyl-D-alanine + ADP + phosphate + H(+). The protein operates within cell wall biogenesis; peptidoglycan biosynthesis. In terms of biological role, cell wall formation. The sequence is that of D-alanine--D-alanine ligase from Burkholderia cenocepacia (strain HI2424).